Consider the following 122-residue polypeptide: Beta-2-microglobulin (122 aa).

Positions 1–23 (MFLRSTFVAALVACLAYIHLGDA) are cleaved as a signal peptide. An Ig-like C1-type domain is found at 28–117 (PKVQIYSRNV…STLREATRFT (90 aa)). C48 and C103 are oxidised to a cystine.

The protein belongs to the beta-2-microglobulin family. Heterodimer of an alpha chain and a beta chain. Beta-2-microglobulin is the beta-chain of major histocompatibility complex class I molecules.

The protein localises to the secreted. Functionally, component of the class I major histocompatibility complex (MHC). Involved in the presentation of peptide antigens to the immune system. The chain is Beta-2-microglobulin (b2m) from Acipenser baerii (Siberian sturgeon).